A 255-amino-acid chain; its full sequence is MAEEHKHEESIMEKISEKIHGHDDSSSSSSDSDDDKNSASLKTKIYRLFGREQPLHKLFGGGKPADIFLWRNKKVSGGVLGAATVSWILFELLEYNLLTLFGHISILALAVLFLWSSASTFIHKSPLHIPEVHIPEDVVLQLASGLRIEINRGFTVLRDIASGRDLKKFLLVIAGLWVLSKVGSSCNFLTLIYIATVLLFTIPVLYEKYEDKVDDFGEKAMREIKKQYVEFDVKVLSKVMSKIPKGAFAFIKKKD.

Positions Met-1 to Ser-25 are enriched in basic and acidic residues. The interval Met-1 to Ser-38 is disordered. Ala-2 is modified (N-acetylalanine). Residues Pro-64–Asp-255 enclose the Reticulon domain. 3 helical membrane passes run Val-75–Tyr-95, Leu-97–Ser-117, and Cys-186–Tyr-206.

The protein resides in the endoplasmic reticulum membrane. It localises to the vacuole membrane. This chain is Reticulon-like protein B3 (RTNLB3), found in Arabidopsis thaliana (Mouse-ear cress).